A 394-amino-acid chain; its full sequence is MSSSPFFVPRAPYAEDPAKSRGRRFPEDESRTRTPFARDRDRIIHTSAFRRLKEKTQVFVAHEGDNFRTRLTHSLEVAQVARSLATALGLDSDLAETIALGHDIGHPPFGHAGEDELQACMKAFGGFDHNVQTFRVVTELERRYPDFDGLNLTWETLEGIIKHNGPVTEKLGKPSWKAISKYDAEYKLGLNTWASAEAQVAALADDIAYNNHDVDDGVEAGLFTLDELMDVPLIGPILAAVRSERPDLDLRLTRLEAVRRMIGAMVDDVMGETLKRAAATGVQSAEDVRNLDHALVAFSADMAEDLARLRQFLHTRMYRHWKVNRTRSQARRILAEMFGLFLAEPDVLPSEWFARSQNRDEAGRARVVCDYIAGMTDRFAIEEHRKLFQLDVWN.

The tract at residues Met1–Thr34 is disordered. Basic and acidic residues predominate over residues Asp16 to Thr34. In terms of domain architecture, HD spans Arg70–Asn210.

This sequence belongs to the dGTPase family. Type 2 subfamily.

This chain is Deoxyguanosinetriphosphate triphosphohydrolase-like protein, found in Caulobacter sp. (strain K31).